The following is a 173-amino-acid chain: 5-hydroxymethyl-dUMP N-hydrolase (173 aa).

Residue A2 is modified to N-acetylalanine. G16 provides a ligand contact to 5-hydroxymethyl-dUMP. S17 carries the phosphoserine modification. 5-hydroxymethyl-dUMP contacts are provided by I18, R19, G20, S87, G89, and E93. The residue at position 87 (S87) is a Phosphoserine. Phosphoserine occurs at positions 112, 117, 127, and 158. S117 provides a ligand contact to 5-hydroxymethyl-dUMP.

This sequence belongs to the 2'-deoxynucleoside 5'-phosphate N-hydrolase 1 family. Monomer and homodimer.

The protein localises to the cytoplasm. It localises to the nucleus. It catalyses the reaction 5-hydroxymethyl-dUMP + H2O = 5-hydroxymethyluracil + 2-deoxy-D-ribose 5-phosphate. Its function is as follows. Part of a nucleotide salvage pathway that eliminates epigenetically modified 5-hydroxymethyl-dCMP (hmdCMP) in a two-step process entailing deamination to cytotoxic 5-hydroxymethyl-dUMP (hmdUMP), followed by its hydrolysis into 5-hydroxymethyluracil (hmU) and 2-deoxy-D-ribose 5-phosphate (deoxyribosephosphate). Catalyzes the second step in that pathway, the hydrolysis of the N-glycosidic bond in hmdUMP, degrading this cytotoxic nucleotide to avoid its genomic integration. The polypeptide is 5-hydroxymethyl-dUMP N-hydrolase (Mus musculus (Mouse)).